We begin with the raw amino-acid sequence, 270 residues long: Protein ABHD14A (270 aa).

Residues 9 to 29 form a helical; Signal-anchor for type II membrane protein membrane-spanning segment; that stretch reads LVVLGLVLLATVLLYLLLPSM. An N-linked (GlcNAc...) asparagine glycan is attached at Asn61. Catalysis depends on charge relay system residues Ser170 and Asp221. N-linked (GlcNAc...) asparagine glycosylation is present at Asn237. His248 functions as the Charge relay system in the catalytic mechanism.

It belongs to the AB hydrolase superfamily. ABHD14 family.

The protein resides in the cytoplasm. Its subcellular location is the membrane. In terms of biological role, possible role in granule neuron development. The polypeptide is Protein ABHD14A (Danio rerio (Zebrafish)).